The chain runs to 486 residues: Katanin p60 ATPase-containing subunit A1 (486 aa).

The disordered stretch occupies residues 103–174 (RSSPLPVRRP…NKAEVSEKEV (72 aa)). Basic and acidic residues predominate over residues 143 to 174 (NGDRAKPLKGKEKKEAKPKDDKNKAEVSEKEV). Residue 244 to 251 (GPPGTGKT) coordinates ATP.

The protein belongs to the AAA ATPase family. Katanin p60 subunit A1 subfamily. Can homooligomerize into hexameric rings, which may be promoted by interaction with microtubules. Interacts with katnb1, which may serve as a targeting subunit.

It localises to the cytoplasm. Its subcellular location is the cytoskeleton. The protein localises to the microtubule organizing center. The protein resides in the centrosome. It is found in the spindle pole. It localises to the spindle. It catalyses the reaction n ATP + n H2O + a microtubule = n ADP + n phosphate + (n+1) alpha/beta tubulin heterodimers.. Its activity is regulated as follows. ATPase activity is stimulated by microtubules, which promote homooligomerization. ATP-dependent microtubule severing is stimulated by interaction with katnb1. Catalytic subunit of a complex which severs microtubules in an ATP-dependent manner. Microtubule severing may promote rapid reorganization of cellular microtubule arrays and the release of microtubules from the centrosome following nucleation. The polypeptide is Katanin p60 ATPase-containing subunit A1 (katna1) (Salmo salar (Atlantic salmon)).